The following is a 631-amino-acid chain: 1-deoxy-D-xylulose-5-phosphate synthase (631 aa).

Residues His76 and 117 to 119 (AHS) contribute to the thiamine diphosphate site. Asp148 lines the Mg(2+) pocket. Thiamine diphosphate contacts are provided by residues 149-150 (GA), Asn177, Tyr284, and Glu365. Asn177 contributes to the Mg(2+) binding site.

The protein belongs to the transketolase family. DXPS subfamily. In terms of assembly, homodimer. It depends on Mg(2+) as a cofactor. Thiamine diphosphate serves as cofactor.

It carries out the reaction D-glyceraldehyde 3-phosphate + pyruvate + H(+) = 1-deoxy-D-xylulose 5-phosphate + CO2. Its pathway is metabolic intermediate biosynthesis; 1-deoxy-D-xylulose 5-phosphate biosynthesis; 1-deoxy-D-xylulose 5-phosphate from D-glyceraldehyde 3-phosphate and pyruvate: step 1/1. In terms of biological role, catalyzes the acyloin condensation reaction between C atoms 2 and 3 of pyruvate and glyceraldehyde 3-phosphate to yield 1-deoxy-D-xylulose-5-phosphate (DXP). The chain is 1-deoxy-D-xylulose-5-phosphate synthase from Methylibium petroleiphilum (strain ATCC BAA-1232 / LMG 22953 / PM1).